Reading from the N-terminus, the 375-residue chain is Growth/differentiation factor 8 (375 aa).

A signal peptide spans 1–23 (MQKLQIFVYIYLFMLLVAGPVDL). A propeptide spanning residues 24 to 266 (NENSEQKENV…VTDTPKRSRR (243 aa)) is cleaved from the precursor. N-linked (GlcNAc...) asparagine glycosylation is found at Asn-48 and Asn-71. 4 disulfide bridges follow: Cys-272/Cys-282, Cys-281/Cys-340, Cys-309/Cys-372, and Cys-313/Cys-374.

This sequence belongs to the TGF-beta family. Homodimer; disulfide-linked. Interacts with WFIKKN2, leading to inhibit its activity. Interacts with FSTL3. Post-translationally, synthesized as large precursor molecule that undergoes proteolytic cleavage to generate an N-terminal propeptide and a disulfide linked C-terminal dimer, which is the biologically active molecule. The circulating form consists of a latent complex of the C-terminal dimer and other proteins, including its propeptide, which maintain the C-terminal dimer in a latent, inactive state. Ligand activation requires additional cleavage of the prodomain by a tolloid-like metalloproteinase.

The protein resides in the secreted. Acts specifically as a negative regulator of skeletal muscle growth. In Ovis aries (Sheep), this protein is Growth/differentiation factor 8 (MSTN).